We begin with the raw amino-acid sequence, 55 residues long: Large ribosomal subunit protein bL33 (55 aa).

This sequence belongs to the bacterial ribosomal protein bL33 family.

In Bordetella avium (strain 197N), this protein is Large ribosomal subunit protein bL33.